A 350-amino-acid polypeptide reads, in one-letter code: 2-oxoglutarate-dependent ethylene/succinate-forming enzyme (350 aa).

In terms of domain architecture, Fe2OG dioxygenase spans 166-286 (GWHHMRVLRF…RFACAYFHEP (121 aa)). Residues His189 and His268 each coordinate Fe cation.

This sequence belongs to the iron/ascorbate-dependent oxidoreductase family. In terms of assembly, monomer. Requires Fe(2+) as cofactor.

The catalysed reaction is 2-oxoglutarate + O2 + 2 H(+) = ethene + 3 CO2 + H2O. It catalyses the reaction L-arginine + 2-oxoglutarate + O2 = guanidine + L-glutamate 5-semialdehyde + succinate + CO2. It functions in the pathway alkene biosynthesis; ethylene biosynthesis via 2-oxoglutarate. Activated by catalase. Inhibited by chelating reagents such as EDTA and Tiron (4,5-dihydroxy-1,3-benzene disulphonic acid), and by DTNB (5,5'-dithio-bis-2-nitrobenzoate) and hydrogen peroxide. Functionally, simultaneously catalyzes two reactions, namely formation of ethylene and of succinate from 2-oxoglutarate, with a molar ratio of 2:1. This chain is 2-oxoglutarate-dependent ethylene/succinate-forming enzyme (efe), found in Pseudomonas savastanoi pv. phaseolicola (Pseudomonas syringae pv. phaseolicola).